The primary structure comprises 200 residues: NAD(P)H dehydrogenase (quinone) (200 aa).

In terms of domain architecture, Flavodoxin-like spans V4 to V191. Residues S10–I15 and T79–F81 contribute to the FMN site. Residue Y12 participates in NAD(+) binding. Position 99 (W99) interacts with substrate. FMN contacts are provided by residues S114–G120 and H135.

Belongs to the WrbA family. It depends on FMN as a cofactor.

It carries out the reaction a quinone + NADH + H(+) = a quinol + NAD(+). The catalysed reaction is a quinone + NADPH + H(+) = a quinol + NADP(+). This is NAD(P)H dehydrogenase (quinone) from Rhodospirillum centenum (strain ATCC 51521 / SW).